The following is a 38-amino-acid chain: Photosystem II reaction center protein L (38 aa).

A helical membrane pass occupies residues 17 to 37 (SLYWGLLLIFVLAVLFSNYFF).

It belongs to the PsbL family. PSII is composed of 1 copy each of membrane proteins PsbA, PsbB, PsbC, PsbD, PsbE, PsbF, PsbH, PsbI, PsbJ, PsbK, PsbL, PsbM, PsbT, PsbX, PsbY, PsbZ, Psb30/Ycf12, at least 3 peripheral proteins of the oxygen-evolving complex and a large number of cofactors. It forms dimeric complexes.

The protein localises to the plastid. It is found in the chloroplast thylakoid membrane. One of the components of the core complex of photosystem II (PSII). PSII is a light-driven water:plastoquinone oxidoreductase that uses light energy to abstract electrons from H(2)O, generating O(2) and a proton gradient subsequently used for ATP formation. It consists of a core antenna complex that captures photons, and an electron transfer chain that converts photonic excitation into a charge separation. This subunit is found at the monomer-monomer interface and is required for correct PSII assembly and/or dimerization. This chain is Photosystem II reaction center protein L, found in Antirrhinum majus (Garden snapdragon).